We begin with the raw amino-acid sequence, 232 residues long: Fibrillarin-like rRNA/tRNA 2'-O-methyltransferase (232 aa).

S-adenosyl-L-methionine contacts are provided by residues 89-90, 108-109, 133-134, and 153-156; these read TT, EF, DA, and DIAQ.

This sequence belongs to the methyltransferase superfamily. Fibrillarin family. As to quaternary structure, interacts with nop5. Component of box C/D small ribonucleoprotein (sRNP) particles that contain rpl7ae, FlpA and nop5, plus a guide RNA.

In terms of biological role, involved in pre-rRNA and tRNA processing. Utilizes the methyl donor S-adenosyl-L-methionine to catalyze the site-specific 2'-hydroxyl methylation of ribose moieties in rRNA and tRNA. Site specificity is provided by a guide RNA that base pairs with the substrate. Methylation occurs at a characteristic distance from the sequence involved in base pairing with the guide RNA. This Methanopyrus kandleri (strain AV19 / DSM 6324 / JCM 9639 / NBRC 100938) protein is Fibrillarin-like rRNA/tRNA 2'-O-methyltransferase.